Here is a 631-residue protein sequence, read N- to C-terminus: Sperm-associated antigen 16 protein (631 aa).

The stretch at 152–267 (DVYTQIMLLE…LQETLKKLQR (116 aa)) forms a coiled coil. Residues 266–332 (QRGHSYHGPQ…QPNPNLNVSK (67 aa)) are disordered. 2 stretches are compositionally biased toward basic and acidic residues: residues 277–287 (KVDHSREKENA) and 295–304 (GLREAREQNK). WD repeat units lie at residues 350 to 389 (LHEL…VLLT), 392 to 431 (GHTD…CILT), 434 to 473 (GHSR…CRCT), 476 to 515 (GHTD…CEQS), 518 to 557 (GHMH…PIVS), 560 to 600 (IGPS…HKLM), and 601 to 630 (GHEN…VRTW).

In terms of assembly, interacts with SPAG6 and STK36. In terms of processing, phosphorylated by TSSK2. As to expression, isoform 1 is detected in testis. Isoform 4 is detected in testis and brain, and at lower levels in kidney, heart, pancreas, thyroid, ovary, adrenal gland, spinal cord, trachea and liver.

The protein localises to the cytoplasm. It localises to the cytoskeleton. The protein resides in the flagellum axoneme. It is found in the cilium axoneme. Its subcellular location is the cell projection. The protein localises to the cilium. It localises to the flagellum. Functionally, necessary for sperm flagellar function. Plays a role in motile ciliogenesis. May help to recruit STK36 to the cilium or apical surface of the cell to initiate subsequent steps of construction of the central pair apparatus of motile cilia. This is Sperm-associated antigen 16 protein (SPAG16) from Homo sapiens (Human).